Consider the following 689-residue polypeptide: DNA ligase (689 aa).

Residues 40–44 (DSEYD), 89–90 (SL), and E121 each bind NAD(+). The active-site N6-AMP-lysine intermediate is K123. NAD(+)-binding residues include R144, E179, K295, and K319. Zn(2+)-binding residues include C413, C416, C431, and C437. In terms of domain architecture, BRCT spans 610–689 (REQNILTGKI…VEWLAFIKNA (80 aa)).

Belongs to the NAD-dependent DNA ligase family. LigA subfamily. It depends on Mg(2+) as a cofactor. Mn(2+) is required as a cofactor.

The catalysed reaction is NAD(+) + (deoxyribonucleotide)n-3'-hydroxyl + 5'-phospho-(deoxyribonucleotide)m = (deoxyribonucleotide)n+m + AMP + beta-nicotinamide D-nucleotide.. Its function is as follows. DNA ligase that catalyzes the formation of phosphodiester linkages between 5'-phosphoryl and 3'-hydroxyl groups in double-stranded DNA using NAD as a coenzyme and as the energy source for the reaction. It is essential for DNA replication and repair of damaged DNA. This chain is DNA ligase, found in Rickettsia prowazekii (strain Madrid E).